A 235-amino-acid chain; its full sequence is MDFIAGEILYFNKPLTWTSFDLVNKFRYKLSRKLKVKKIKVGHAGTLDPLATGVMIVCTGRATKRIDEFQYQTKEYIATLKLGETTPSFDLEKEIDAVYPTEHITRELVEEVLKTFVGTIQQIPPVFSACKVEGKRAYELARKGEEVELKSKTLVIDELELLECDLPVIKIRVVCSKGTYIRALARDIGKALGSGAHLIGLERTRIGEVTLDMCMSPEEIDDFLEQNVVKIEEEK.

The active-site Nucleophile is Asp-48.

It belongs to the pseudouridine synthase TruB family. Type 1 subfamily.

It catalyses the reaction uridine(55) in tRNA = pseudouridine(55) in tRNA. Responsible for synthesis of pseudouridine from uracil-55 in the psi GC loop of transfer RNAs. This chain is tRNA pseudouridine synthase B, found in Parabacteroides distasonis (strain ATCC 8503 / DSM 20701 / CIP 104284 / JCM 5825 / NCTC 11152).